The chain runs to 82 residues: Myosin light chain alkali (82 aa).

The region spanning 7–42 (GCYGDFIECLKLYDKEENGTMMLAELQHALLALGES) is the EF-hand domain.

In terms of assembly, myosin is a hexamer of 2 heavy chains and 4 light chains.

The chain is Myosin light chain alkali (Mlc1) from Drosophila sechellia (Fruit fly).